The following is a 299-amino-acid chain: Pyridoxal kinase PdxY (299 aa).

Ser-18 lines the substrate pocket. Residues Asp-120 and Glu-157 each contribute to the ATP site. Asp-235 lines the substrate pocket.

Belongs to the pyridoxine kinase family. PdxY subfamily. As to quaternary structure, homodimer. Mg(2+) is required as a cofactor.

The catalysed reaction is pyridoxal + ATP = pyridoxal 5'-phosphate + ADP + H(+). Its pathway is cofactor metabolism; pyridoxal 5'-phosphate salvage; pyridoxal 5'-phosphate from pyridoxal: step 1/1. Its function is as follows. Pyridoxal kinase involved in the salvage pathway of pyridoxal 5'-phosphate (PLP). Catalyzes the phosphorylation of pyridoxal to PLP. The sequence is that of Pyridoxal kinase PdxY from Deinococcus geothermalis (strain DSM 11300 / CIP 105573 / AG-3a).